A 284-amino-acid polypeptide reads, in one-letter code: MKQKVVNIGDIKVANDLPFVLFGGMNVLESRDLAMRICEHYVTVTQKLGIPYVFKASFDKANRSSIHSYRGPGLEEGMKIFQELKQTFGVKVITDVHEASQAQPVADVVDVIQLPAFLARQTDLVEAMAKTGAVINVKKPQFVSPGQMGNIVDKFHEGGNDKVILCDRGANFGYDNLVVDMLGFSVMKKVSGNSPVIFDVTHALQCRDPFGAASGGRRGQVTELARAGMAVGLAGLFLESHPDPANAKCDGPSALPLAKLEQFLTQIKAIDDLVKSFDELDTEN.

Belongs to the KdsA family.

It localises to the cytoplasm. The enzyme catalyses D-arabinose 5-phosphate + phosphoenolpyruvate + H2O = 3-deoxy-alpha-D-manno-2-octulosonate-8-phosphate + phosphate. It participates in carbohydrate biosynthesis; 3-deoxy-D-manno-octulosonate biosynthesis; 3-deoxy-D-manno-octulosonate from D-ribulose 5-phosphate: step 2/3. The protein operates within bacterial outer membrane biogenesis; lipopolysaccharide biosynthesis. In Salmonella enteritidis PT4 (strain P125109), this protein is 2-dehydro-3-deoxyphosphooctonate aldolase.